Reading from the N-terminus, the 545-residue chain is CTP synthase (545 aa).

Residues Met-1–Met-267 form an amidoligase domain region. Residue Ser-13 coordinates CTP. Ser-13 provides a ligand contact to UTP. ATP is bound by residues Ser-14–Ile-19 and Asp-71. Residues Asp-71 and Glu-141 each contribute to the Mg(2+) site. CTP is bound by residues Asp-148–Glu-150, Lys-188–Gln-193, and Lys-224. UTP contacts are provided by residues Lys-188 to Gln-193 and Lys-224. The region spanning Glu-292–Pro-534 is the Glutamine amidotransferase type-1 domain. Gly-354 contacts L-glutamine. The Nucleophile; for glutamine hydrolysis role is filled by Cys-381. L-glutamine contacts are provided by residues Leu-382–Gln-385, Glu-405, and Arg-462. Active-site residues include His-507 and Glu-509.

Belongs to the CTP synthase family. As to quaternary structure, homotetramer.

The enzyme catalyses UTP + L-glutamine + ATP + H2O = CTP + L-glutamate + ADP + phosphate + 2 H(+). The catalysed reaction is L-glutamine + H2O = L-glutamate + NH4(+). It carries out the reaction UTP + NH4(+) + ATP = CTP + ADP + phosphate + 2 H(+). The protein operates within pyrimidine metabolism; CTP biosynthesis via de novo pathway; CTP from UDP: step 2/2. With respect to regulation, allosterically activated by GTP, when glutamine is the substrate; GTP has no effect on the reaction when ammonia is the substrate. The allosteric effector GTP functions by stabilizing the protein conformation that binds the tetrahedral intermediate(s) formed during glutamine hydrolysis. Inhibited by the product CTP, via allosteric rather than competitive inhibition. In terms of biological role, catalyzes the ATP-dependent amination of UTP to CTP with either L-glutamine or ammonia as the source of nitrogen. Regulates intracellular CTP levels through interactions with the four ribonucleotide triphosphates. The polypeptide is CTP synthase (Trichormus variabilis (strain ATCC 29413 / PCC 7937) (Anabaena variabilis)).